The chain runs to 274 residues: 2,3,4,5-tetrahydropyridine-2,6-dicarboxylate N-succinyltransferase (274 aa).

Residues Arg-106 and Asp-143 each contribute to the substrate site.

Belongs to the transferase hexapeptide repeat family. Homotrimer.

It is found in the cytoplasm. The enzyme catalyses (S)-2,3,4,5-tetrahydrodipicolinate + succinyl-CoA + H2O = (S)-2-succinylamino-6-oxoheptanedioate + CoA. It participates in amino-acid biosynthesis; L-lysine biosynthesis via DAP pathway; LL-2,6-diaminopimelate from (S)-tetrahydrodipicolinate (succinylase route): step 1/3. The polypeptide is 2,3,4,5-tetrahydropyridine-2,6-dicarboxylate N-succinyltransferase (Paracidovorax citrulli (strain AAC00-1) (Acidovorax citrulli)).